A 367-amino-acid chain; its full sequence is GTP cyclohydrolase FolE2 (367 aa).

This sequence belongs to the GTP cyclohydrolase IV family.

It carries out the reaction GTP + H2O = 7,8-dihydroneopterin 3'-triphosphate + formate + H(+). Its pathway is cofactor biosynthesis; 7,8-dihydroneopterin triphosphate biosynthesis; 7,8-dihydroneopterin triphosphate from GTP: step 1/1. In terms of biological role, converts GTP to 7,8-dihydroneopterin triphosphate. The chain is GTP cyclohydrolase FolE2 from Roseobacter denitrificans (strain ATCC 33942 / OCh 114) (Erythrobacter sp. (strain OCh 114)).